Consider the following 465-residue polypeptide: Catalase cnsD (465 aa).

H39 is an active-site residue. Residue Y331 coordinates heme.

The protein belongs to the catalase family. It depends on heme as a cofactor.

Its pathway is alkaloid biosynthesis. In terms of biological role, catalase; part of the gene cluster that mediates the biosynthesis of communesins, a prominent class of indole alkaloids with great potential as pharmaceuticals. Communesins are biosynthesized by the coupling of tryptamine and aurantioclavine, two building blocks derived from L-tryptophan. The L-tryptophan decarboxylase cnsB converts L-tryptophan to tryptamine, whereas the tryptophan dimethylallyltransferase cnsF converts L-tryptophan to 4-dimethylallyl tryptophan which is further transformed to aurantioclavine by the aurantioclavine synthase cnsA, probably aided by the catalase cnsD. The cytochrome P450 monooxygenase cnsC catalyzes the heterodimeric coupling between the two different indole moieties, tryptamine and aurantioclavine, to construct vicinal quaternary stereocenters and yield the heptacyclic communesin scaffold. The O-methyltransferase cnsE then methylates the communesin scaffold to produce communesin K, the simplest characterized communesin that contains the heptacyclic core. The dioxygenase cnsJ converts communesin K into communesin I. Acylation to introduce the hexadienyl group at position N16 of communesin I by the acyltransferase cnsK leads to the production of communesin B. The hexadienyl group is produced by the highly reducing polyketide synthase cnsI, before being hydrolytically removed from cnsI by the serine hydrolase cnsH, converted into hexadienyl-CoA by the CoA ligase cnsG, and then transferred to communesin I by cnsK. Surprisingly, cnsK may also be a promiscuous acyltransferase that can tolerate a range of acyl groups, including acetyl-, propionyl-, and butyryl-CoA, which lead to communesins A, G and H respectively. The roles of the alpha-ketoglutarate-dependent dioxygenases cnsM and cnsP have still to be determined. The chain is Catalase cnsD from Penicillium expansum (Blue mold rot fungus).